The sequence spans 351 residues: Epoxyqueuosine reductase (351 aa).

Aspartate 131 serves as the catalytic Proton donor. Residues 177-205 (EDQPVDYGCGSCTRCVDFCPTKALLGDGR) form the 4Fe-4S ferredoxin-type domain. [4Fe-4S] cluster-binding residues include cysteine 185, cysteine 188, cysteine 191, cysteine 195, cysteine 211, cysteine 237, cysteine 240, and cysteine 244.

This sequence belongs to the QueG family. As to quaternary structure, monomer. It depends on cob(II)alamin as a cofactor. [4Fe-4S] cluster is required as a cofactor.

The protein localises to the cytoplasm. It carries out the reaction epoxyqueuosine(34) in tRNA + AH2 = queuosine(34) in tRNA + A + H2O. It functions in the pathway tRNA modification; tRNA-queuosine biosynthesis. Catalyzes the conversion of epoxyqueuosine (oQ) to queuosine (Q), which is a hypermodified base found in the wobble positions of tRNA(Asp), tRNA(Asn), tRNA(His) and tRNA(Tyr). The chain is Epoxyqueuosine reductase from Lactococcus garvieae (strain Lg2) (Enterococcus seriolicida).